Reading from the N-terminus, the 481-residue chain is uncharacterized protein (481 aa).

The protein belongs to the metallophosphoesterase superfamily.

This is an uncharacterized protein from Bacillus subtilis (strain 168).